A 556-amino-acid polypeptide reads, in one-letter code: Formate--tetrahydrofolate ligase (556 aa).

Residue 65–72 (TPAGEGKS) participates in ATP binding.

This sequence belongs to the formate--tetrahydrofolate ligase family.

It carries out the reaction (6S)-5,6,7,8-tetrahydrofolate + formate + ATP = (6R)-10-formyltetrahydrofolate + ADP + phosphate. The protein operates within one-carbon metabolism; tetrahydrofolate interconversion. This chain is Formate--tetrahydrofolate ligase, found in Streptococcus thermophilus (strain ATCC BAA-250 / LMG 18311).